Consider the following 401-residue polypeptide: 8-amino-7-oxononanoate synthase (401 aa).

R24 is a binding site for substrate. 111 to 112 lines the pyridoxal 5'-phosphate pocket; that stretch reads GF. Residue H137 coordinates substrate. Pyridoxal 5'-phosphate-binding residues include S183, H211, and T240. K243 carries the post-translational modification N6-(pyridoxal phosphate)lysine. T357 contacts substrate.

It belongs to the class-II pyridoxal-phosphate-dependent aminotransferase family. BioF subfamily. In terms of assembly, homodimer. The cofactor is pyridoxal 5'-phosphate.

It catalyses the reaction 6-carboxyhexanoyl-[ACP] + L-alanine + H(+) = (8S)-8-amino-7-oxononanoate + holo-[ACP] + CO2. It participates in cofactor biosynthesis; biotin biosynthesis. In terms of biological role, catalyzes the decarboxylative condensation of pimeloyl-[acyl-carrier protein] and L-alanine to produce 8-amino-7-oxononanoate (AON), [acyl-carrier protein], and carbon dioxide. This chain is 8-amino-7-oxononanoate synthase, found in Xylella fastidiosa (strain 9a5c).